A 66-amino-acid chain; its full sequence is Large ribosomal subunit protein uL29 (66 aa).

This sequence belongs to the universal ribosomal protein uL29 family.

The chain is Large ribosomal subunit protein uL29 from Borreliella afzelii (strain PKo) (Borrelia afzelii).